Here is a 309-residue protein sequence, read N- to C-terminus: Ribosomal RNA small subunit methyltransferase H (309 aa).

Residues 32–34, D52, F79, D100, and Q107 each bind S-adenosyl-L-methionine; that span reads AGH.

It belongs to the methyltransferase superfamily. RsmH family.

Its subcellular location is the cytoplasm. The enzyme catalyses cytidine(1402) in 16S rRNA + S-adenosyl-L-methionine = N(4)-methylcytidine(1402) in 16S rRNA + S-adenosyl-L-homocysteine + H(+). In terms of biological role, specifically methylates the N4 position of cytidine in position 1402 (C1402) of 16S rRNA. This is Ribosomal RNA small subunit methyltransferase H from Mycoplasma capricolum subsp. capricolum (strain California kid / ATCC 27343 / NCTC 10154).